The sequence spans 158 residues: Phosphopantetheine adenylyltransferase (158 aa).

Residue Thr-10 participates in substrate binding. Residues 10–11 (TF) and His-18 each bind ATP. Substrate-binding residues include Lys-42, Leu-74, and Arg-88. Residues 89-91 (GIR), Glu-99, and 124-130 (WRYLSST) contribute to the ATP site.

It belongs to the bacterial CoaD family. Homohexamer. It depends on Mg(2+) as a cofactor.

It localises to the cytoplasm. It carries out the reaction (R)-4'-phosphopantetheine + ATP + H(+) = 3'-dephospho-CoA + diphosphate. It functions in the pathway cofactor biosynthesis; coenzyme A biosynthesis; CoA from (R)-pantothenate: step 4/5. Reversibly transfers an adenylyl group from ATP to 4'-phosphopantetheine, yielding dephospho-CoA (dPCoA) and pyrophosphate. The polypeptide is Phosphopantetheine adenylyltransferase (Actinobacillus pleuropneumoniae serotype 7 (strain AP76)).